The sequence spans 597 residues: MEADITNLRNKLKECEDERLKAAQYGLQLLERQTELQSQLDKCHEEMMTTAENYNQEKYALQREVELKSRMLESLSCECEALRQQQKAQLEQLEMQLHRSHRQEVHGLRNKLENLKVELDEARLSEKQLKQKLDHQGELLSHKSEELRLLSEQRALSSVSSELLSLQTELTEAEGVKNALREEVNELQCKQEQLECLNASLLHQVDRLKEEKEEREKEAVSYYNALEKARVENQDLQVQLGHALQQAADPNSKGNSLFAEVEDRRVAMERRLNLMKDKYQSLKKQNAFTRDQMNKMKLQISTLLRMRGSQTEFEQQERLFAMLEQKNGEIKHLLGEINKLEKFKNLYENMESKSSTSDSACALEDSTYYTDLLQLKLDKLNKENESTKGELSIQRMKALFESQRTLDIERKLFANERHLQLSESENLKLRAKLDELKLKYEPEERIEVPVLKRRREVLPLNINTPEETAAASATGEDVSRLPLERKEESCLDNLKDNTVQWKQPASLSPHKSLPLDTQPKKEKCVTLVASPASTEVLHEQSGNTPSSPRLTEESRLPTKVKERKEATSKLEKGASKKSHTIMYVSSKSTPEMQCPQQ.

N-acetylmethionine is present on Met-1. A coiled-coil region spans residues 1–445; that stretch reads MEADITNLRN…LKLKYEPEER (445 aa). Phosphoserine occurs at positions 508 and 547. Residues 531 to 597 are disordered; the sequence is PASTEVLHEQ…STPEMQCPQQ (67 aa). Positions 540 to 549 are enriched in polar residues; the sequence is QSGNTPSSPR. Basic and acidic residues predominate over residues 550 to 574; sequence LTEESRLPTKVKERKEATSKLEKGA. The segment covering 583-597 has biased composition (polar residues); it reads YVSSKSTPEMQCPQQ.

Belongs to the Spindly family. In terms of assembly, interacts with KNTC1 and ZW10. These interactions appear weak and may be transient or indirect. Interacts with dynein intermediate chain and dynactin (DCTN1). Interacts with the catalytically active form of USP45. In terms of processing, monoubiquitinated with'Lys-48' linkage. Deubiquitinated by USP45.

It is found in the cytoplasm. It localises to the cytoskeleton. The protein resides in the microtubule organizing center. Its subcellular location is the centrosome. The protein localises to the chromosome. It is found in the centromere. It localises to the kinetochore. The protein resides in the nucleus. Its subcellular location is the spindle pole. In terms of biological role, required for the localization of dynein and dynactin to the mitotic kintochore. Dynein is believed to control the initial lateral interaction between the kinetochore and spindle microtubules and to facilitate the subsequent formation of end-on kinetochore-microtubule attachments mediated by the NDC80 complex. Also required for correct spindle orientation. Does not appear to be required for the removal of spindle assembly checkpoint (SAC) proteins from the kinetochore upon bipolar spindle attachment. Acts as an adapter protein linking the dynein motor complex to various cargos and converts dynein from a non-processive to a highly processive motor in the presence of dynactin. Facilitates the interaction between dynein and dynactin and activates dynein processivity (the ability to move along a microtubule for a long distance without falling off the track). Plays a role in cell migration. This is Protein Spindly (Spdl1) from Rattus norvegicus (Rat).